A 411-amino-acid chain; its full sequence is Na(+)-translocating NADH-quinone reductase subunit B (411 aa).

The next 3 membrane-spanning stretches (helical) occupy residues 56–76, 120–140, and 166–186; these read MMIT…YNVG, ALGA…CTIW, and IVPP…GIIV. The residue at position 233 (T233) is an FMN phosphoryl threonine. 5 consecutive transmembrane segments (helical) span residues 272 to 292, 294 to 314, 319 to 339, 348 to 368, and 378 to 398; these read VSTL…IAAW, IIAG…LIGS, MFSM…GMVF, SFTN…AVLI, and GMML…YIVV.

This sequence belongs to the NqrB/RnfD family. As to quaternary structure, composed of six subunits; NqrA, NqrB, NqrC, NqrD, NqrE and NqrF. FMN serves as cofactor.

Its subcellular location is the cell inner membrane. It catalyses the reaction a ubiquinone + n Na(+)(in) + NADH + H(+) = a ubiquinol + n Na(+)(out) + NAD(+). NQR complex catalyzes the reduction of ubiquinone-1 to ubiquinol by two successive reactions, coupled with the transport of Na(+) ions from the cytoplasm to the periplasm. NqrA to NqrE are probably involved in the second step, the conversion of ubisemiquinone to ubiquinol. In Haemophilus influenzae (strain 86-028NP), this protein is Na(+)-translocating NADH-quinone reductase subunit B.